The chain runs to 25 residues: Bombinin-like peptide 4 (25 aa).

F25 is subject to Phenylalanine amide.

The protein belongs to the bombinin family. Expressed by the skin glands.

It is found in the secreted. Its function is as follows. Has antimicrobial activity, but no hemolytic activity. Preference on killing Gram-negative non-enteric bacteria. The chain is Bombinin-like peptide 4 from Bombina orientalis (Oriental fire-bellied toad).